A 456-amino-acid chain; its full sequence is Cell cycle checkpoint control protein Rad9 (456 aa).

Positions 300-302 (KRK) match the Nuclear localization signal motif.

This sequence belongs to the rad9 family. As to quaternary structure, component of the 9-1-1 checkpoint clamp complex consisting of Rad9 isoform A, Rad1 and Hus1-like; the interaction with Hus1-like is direct. Does not interact directly with Rad1; this interaction is probably mediated by Hus1-like. This complex probably also forms with Rad9 isoform B, however 9-1-1 complex containing Rad9 isoform A localizes to the nuclear periphery. Interacts with Brca2. Expressed in ovary.

The protein localises to the nucleus envelope. The protein resides in the nucleus. Functionally, component of the Rad9-Rad1-Hus1 (9-1-1) checkpoint clamp complex. In terms of biological role, targets the 9-1-1 complex to the nuclear periphery. Targeting to the nuclear periphery is disrupted in the presence of persistent double stranded break DNA damage, possibly as a function of the meiotic checkpoint. The sequence is that of Cell cycle checkpoint control protein Rad9 from Drosophila melanogaster (Fruit fly).